A 416-amino-acid chain; its full sequence is Transcription factor LATE FLOWERING (416 aa).

Low complexity-rich tracts occupy residues 176 to 186 and 200 to 212; these read STTTTTTALPP and TSPTTKTTTTSET. Disordered stretches follow at residues 176 to 226 and 276 to 311; these read STTT…AGGS and LGGPASASDPSSRPPPPPQRPRRKNVRISSDPQTVA. The basic motif; degenerate stretch occupies residues 303–316; the sequence is ISSDPQTVAARLRR. In terms of domain architecture, bHLH spans 303–352; sequence ISSDPQTVAARLRRERVSERLRVLQRLVPGGSKMDTATMLDEAASYLKFL. Residues 317-352 are helix-loop-helix motif; it reads ERVSERLRVLQRLVPGGSKMDTATMLDEAASYLKFL.

It belongs to the bHLH protein family. In terms of assembly, interacts with PIL13 and PIL15.

The protein localises to the nucleus. In terms of biological role, transcription factor involved in the negative regulation of flowering. May be involved in the repression of the flowering factor GI and HD1 by interacting with PIL13 and PIL15 and competing with PRR1. Possesses transactivation activity in yeast. The polypeptide is Transcription factor LATE FLOWERING (Oryza sativa subsp. japonica (Rice)).